The chain runs to 445 residues: Phosphoglucosamine mutase (445 aa).

Serine 102 acts as the Phosphoserine intermediate in catalysis. The Mg(2+) site is built by serine 102, aspartate 241, aspartate 243, and aspartate 245. The residue at position 102 (serine 102) is a Phosphoserine.

It belongs to the phosphohexose mutase family. It depends on Mg(2+) as a cofactor. Post-translationally, activated by phosphorylation.

The catalysed reaction is alpha-D-glucosamine 1-phosphate = D-glucosamine 6-phosphate. Functionally, catalyzes the conversion of glucosamine-6-phosphate to glucosamine-1-phosphate. This Acinetobacter baumannii (strain ACICU) protein is Phosphoglucosamine mutase.